Reading from the N-terminus, the 244-residue chain is Probable transcriptional regulatory protein DR_2548 (244 aa).

Residues 1 to 23 are disordered; that stretch reads MAGHSKWAQIKRKKGANDKKRSA.

It belongs to the TACO1 family.

The protein resides in the cytoplasm. This Deinococcus radiodurans (strain ATCC 13939 / DSM 20539 / JCM 16871 / CCUG 27074 / LMG 4051 / NBRC 15346 / NCIMB 9279 / VKM B-1422 / R1) protein is Probable transcriptional regulatory protein DR_2548.